Here is a 148-residue protein sequence, read N- to C-terminus: Prefoldin subunit alpha (148 aa).

The protein belongs to the prefoldin subunit alpha family. In terms of assembly, heterohexamer of two alpha and four beta subunits.

It is found in the cytoplasm. Its function is as follows. Molecular chaperone capable of stabilizing a range of proteins. Seems to fulfill an ATP-independent, HSP70-like function in archaeal de novo protein folding. The protein is Prefoldin subunit alpha (pfdA) of Pyrococcus horikoshii (strain ATCC 700860 / DSM 12428 / JCM 9974 / NBRC 100139 / OT-3).